We begin with the raw amino-acid sequence, 328 residues long: MAANIAAAAAAAQEVDPVLKKAIKLLHSSNPTSAAELRLLLDEALKARFGPEKSLTNNMTPRMLEDEANFSGRAATPPQQPINADEIINLTNSPDKEPSDSVDTIADSDDGLSAVGIVNTGDTGDFGDLNCCVCGEMVFTATNRLIECSKCGAMYHQECHKPPITKEEAADDQEQNWQCDTCCNKPTSSGRTTSSAAAVTPTVFIADEPMPLTSKAKSSVASSRSSNSSNSSSPFYRPEPSSSTNASSSSSSKHGHKSSSSSSSKSHKEERSSKSTAASSLSAIGGMEKHNSSGTSSRRSGSSTKSSSKSSSSKHHESGSSSKRRSKQ.

Residues 1–45 (MAANIAAAAAAAQEVDPVLKKAIKLLHSSNPTSAAELRLLLDEAL) form a sufficient for binding to IntS1 and IntS9 and for 3'-end snRNA processing region. Residues 128–185 (DLNCCVCGEMVFTATNRLIECSKCGAMYHQECHKPPITKEEAADDQEQNWQCDTCCNK) form a PHD-type zinc finger. Low complexity-rich tracts occupy residues 215–233 (KAKS…NSSS), 241–264 (SSST…SSSS), 274–283 (KSTAASSLSA), and 292–311 (SSGT…SKSS). The disordered stretch occupies residues 215–328 (KAKSSVASSR…GSSSKRRSKQ (114 aa)).

This sequence belongs to the Integrator subunit 12 family. In terms of assembly, belongs to the multiprotein complex Integrator, at least composed of IntS1, IntS2, IntS3, IntS4, omd/IntS5, IntS6, defl/IntS7, IntS8, IntS9, IntS10, IntS11, IntS12, asun/IntS13, IntS14 and IntS15. The core complex associates with protein phosphatase 2A subunits mts/PP2A and Pp2A-29B, to form the Integrator-PP2A (INTAC) complex. Within the complex, interacts with IntS1 and IntS9. Interaction with IntS1 is likely to be important for promoting 3'-end processing of snRNAs.

Its subcellular location is the nucleus. Functionally, component of the integrator complex, a multiprotein complex that terminates RNA polymerase II (Pol II) transcription in the promoter-proximal region of genes. The integrator complex provides a quality checkpoint during transcription elongation by driving premature transcription termination of transcripts that are unfavorably configured for transcriptional elongation: the complex terminates transcription by (1) catalyzing dephosphorylation of the C-terminal domain (CTD) of Pol II subunit Polr2A/Rbp1 and Spt5, and (2) degrading the exiting nascent RNA transcript via endonuclease activity. The integrator complex is also involved in the 3'-end processing of the U7 snRNA, and also the spliceosomal snRNAs U1, U2, U4 and U5. Required for the normal expression of the Integrator complex component IntS1. The chain is Integrator complex subunit 12 from Drosophila melanogaster (Fruit fly).